The chain runs to 126 residues: Small ribosomal subunit protein uS12m (126 aa).

The segment covering 1–11 has biased composition (polar residues); it reads MATSNQMGANT. The disordered stretch occupies residues 1-21; it reads MATSNQMGANTRSKKKKKNLK. Basic residues predominate over residues 12–21; sequence RSKKKKKNLK.

Belongs to the universal ribosomal protein uS12 family.

Its subcellular location is the mitochondrion. Functionally, protein S12 is involved in the translation initiation step. The sequence is that of Small ribosomal subunit protein uS12m (RPS12) from Bigelowiella natans (Pedinomonas minutissima).